A 197-amino-acid chain; its full sequence is Casparian strip membrane protein 5 (197 aa).

Residues 1-34 (MSTTIDMPGSSKAAKAGKPVLVTTPSRPGGWKKG) are Cytoplasmic-facing. The helical transmembrane segment at 35–55 (VAIMDFILRLGAIAAALGAAA) threads the bilayer. Over 56–84 (TMGLSDQTLPFFTQFFQFEASYDSFTTFQ) the chain is Extracellular. Residues 85–105 (FFVITMALVAGYLVLSLPLSI) form a helical membrane-spanning segment. The Cytoplasmic segment spans residues 106–117 (VAVVRPHAAGPR). A helical membrane pass occupies residues 118–138 (LFLIILDTVFLTLATASGASA). Residues 139–171 (ASIVYLAHNGNQDTNWIAICNQFGDFCAQTSGA) lie on the Extracellular side of the membrane. The chain crosses the membrane as a helical span at residues 172-192 (VVSSLVAVLVFVLLIVMSALV). Topologically, residues 193 to 197 (LGKKH) are cytoplasmic.

The protein belongs to the Casparian strip membrane proteins (CASP) family. As to quaternary structure, homodimer and heterodimers.

Its subcellular location is the cell membrane. Functionally, regulates membrane-cell wall junctions and localized cell wall deposition. Required for establishment of the Casparian strip membrane domain (CSD) and the subsequent formation of Casparian strips, a cell wall modification of the root endodermis that determines an apoplastic barrier between the intraorganismal apoplasm and the extraorganismal apoplasm and prevents lateral diffusion. This Lotus japonicus (Lotus corniculatus var. japonicus) protein is Casparian strip membrane protein 5.